We begin with the raw amino-acid sequence, 403 residues long: tRNA methyltransferase 10 homolog C (403 aa).

Residues 1 to 39 (MAAFLKMSVSVNFFRPFTRFLVPFTLHRKRNNLTILQRY) constitute a mitochondrion transit peptide. S84 is modified (phosphoserine). Residues 138-169 (TKEKVKKARQIKKEMKAAAREEAKNIKLLETT) are a coiled coil. An SAM-dependent MTase TRM10-type domain is found at 191–383 (MGWKGAQAMQ…QFVPKRKHTG (193 aa)).

It belongs to the class IV-like SAM-binding methyltransferase superfamily. TRM10 family. In terms of assembly, component of mitochondrial ribonuclease P, a complex composed of TRMT10C/MRPP1, HSD17B10/MRPP2 and PRORP/MRPP3. Interacts with HSD17B10/MRPP2; forming the MRPP1-MRPP2 subcomplex of the mitochondrial ribonuclease P complex. Interacts with GRSF1.

The protein localises to the mitochondrion matrix. The protein resides in the mitochondrion nucleoid. It carries out the reaction adenosine(9) in tRNA + S-adenosyl-L-methionine = N(1)-methyladenosine(9) in tRNA + S-adenosyl-L-homocysteine + H(+). The enzyme catalyses guanosine(9) in tRNA + S-adenosyl-L-methionine = N(1)-methylguanosine(9) in tRNA + S-adenosyl-L-homocysteine + H(+). It catalyses the reaction an adenosine in mRNA + S-adenosyl-L-methionine = an N(1)-methyladenosine in mRNA + S-adenosyl-L-homocysteine + H(+). Its function is as follows. Mitochondrial tRNA N(1)-methyltransferase involved in mitochondrial tRNA maturation. Component of mitochondrial ribonuclease P, a complex composed of TRMT10C/MRPP1, HSD17B10/MRPP2 and PRORP/MRPP3, which cleaves tRNA molecules in their 5'-ends. Together with HSD17B10/MRPP2, forms a subcomplex of the mitochondrial ribonuclease P, named MRPP1-MRPP2 subcomplex, which displays functions that are independent of the ribonuclease P activity. The MRPP1-MRPP2 subcomplex catalyzes the formation of N(1)-methylguanine and N(1)-methyladenine at position 9 (m1G9 and m1A9, respectively) in tRNAs; TRMT10C/MRPP1 acting as the catalytic N(1)-methyltransferase subunit. The MRPP1-MRPP2 subcomplex also acts as a tRNA maturation platform: following 5'-end cleavage by the mitochondrial ribonuclease P complex, the MRPP1-MRPP2 subcomplex enhances the efficiency of 3'-processing catalyzed by ELAC2, retains the tRNA product after ELAC2 processing and presents the nascent tRNA to the mitochondrial CCA tRNA nucleotidyltransferase TRNT1 enzyme. In addition to tRNA N(1)-methyltransferase activity, TRMT10C/MRPP1 also acts as a mRNA N(1)-methyltransferase by mediating methylation of adenosine residues at the N(1) position of MT-ND5 mRNA. Associates with mitochondrial DNA complexes at the nucleoids to initiate RNA processing and ribosome assembly. The sequence is that of tRNA methyltransferase 10 homolog C from Homo sapiens (Human).